We begin with the raw amino-acid sequence, 159 residues long: Transmembrane protein 42 (159 aa).

4 helical membrane passes run 37-57 (FWGV…AASA), 59-79 (LAFG…VMAS), 100-120 (IASV…GYVL), and 124-144 (CQEV…TLIH).

The protein resides in the membrane. The chain is Transmembrane protein 42 (TMEM42) from Pongo abelii (Sumatran orangutan).